The following is a 537-amino-acid chain: Glutamyl-tRNA(Gln) amidotransferase subunit B, chloroplastic/mitochondrial (537 aa).

This sequence belongs to the GatB/GatE family. GatB subfamily. As to quaternary structure, subunit of the heterotrimeric GatCAB amidotransferase (AdT) complex, composed of A, B and C subunits.

It is found in the mitochondrion. It localises to the plastid. The protein localises to the chloroplast. It catalyses the reaction L-glutamyl-tRNA(Gln) + L-glutamine + ATP + H2O = L-glutaminyl-tRNA(Gln) + L-glutamate + ADP + phosphate + H(+). Allows the formation of correctly charged Gln-tRNA(Gln) through the transamidation of misacylated Glu-tRNA(Gln) in chloroplasts and mitochondria. The reaction takes place in the presence of glutamine and ATP through an activated gamma-phospho-Glu-tRNA(Gln). This is Glutamyl-tRNA(Gln) amidotransferase subunit B, chloroplastic/mitochondrial from Ostreococcus tauri.